A 1050-amino-acid chain; its full sequence is Probable beta-glucosidase E (1050 aa).

The interval 1 to 87 (MPPPDSNPGS…RSSSTNGGHN (87 aa)) is disordered. Over 1–174 (MPPPDSNPGS…VKYARIWRRT (174 aa)) the chain is Cytoplasmic. Residues 11-20 (FRDHLKHDNK) show a composition bias toward basic and acidic residues. Residues 47–56 (SPRSASASSS) show a composition bias toward low complexity. A compositionally biased stretch (polar residues) spans 78-87 (RSSSTNGGHN). Residues 175–195 (LVVVIVALALLVWGFLRFTAA) form a helical; Signal-anchor for type II membrane protein membrane-spanning segment. The Extracellular portion of the chain corresponds to 196 to 1050 (QRQGPKVWPM…SRDLPLQAKY (855 aa)). Asn-236, Asn-244, Asn-300, and Asn-430 each carry an N-linked (GlcNAc...) asparagine glycan. Asp-458 is an active-site residue. Asn-501, Asn-540, Asn-605, Asn-884, Asn-920, Asn-929, and Asn-993 each carry an N-linked (GlcNAc...) asparagine glycan.

This sequence belongs to the glycosyl hydrolase 3 family.

Its subcellular location is the cell membrane. It carries out the reaction Hydrolysis of terminal, non-reducing beta-D-glucosyl residues with release of beta-D-glucose.. The protein operates within glycan metabolism; cellulose degradation. Beta-glucosidases are one of a number of cellulolytic enzymes involved in the degradation of cellulosic biomass. Catalyzes the last step releasing glucose from the inhibitory cellobiose. The protein is Probable beta-glucosidase E (bglE) of Aspergillus clavatus (strain ATCC 1007 / CBS 513.65 / DSM 816 / NCTC 3887 / NRRL 1 / QM 1276 / 107).